The sequence spans 527 residues: Secologanin synthase 2 (527 aa).

The Lumenal portion of the chain corresponds to 1 to 11 (MEMDMDIIRKA). The chain crosses the membrane as a helical span at residues 12–32 (IAATIFALVMAWAWRVLDWAW). Topologically, residues 33–527 (FTPKRIEKRL…IYKKLERQNF (495 aa)) are cytoplasmic. C470 serves as a coordination point for heme.

This sequence belongs to the cytochrome P450 family. Heme serves as cofactor. Expressed in leaves (especially in leaf epidermis), and, to a lower extent, in roots, stems, flower buds and flowers.

Its subcellular location is the endoplasmic reticulum membrane. The enzyme catalyses loganin + reduced [NADPH--hemoprotein reductase] + O2 = secologanin + oxidized [NADPH--hemoprotein reductase] + 2 H2O + H(+). It catalyses the reaction secologanin + reduced [NADPH--hemoprotein reductase] + O2 = secoxyloganin + oxidized [NADPH--hemoprotein reductase] + H2O + 2 H(+). Its pathway is alkaloid biosynthesis. Functionally, component of the seco-iridoid and derivatives monoterpenoid indole alkaloids (MIAs, e.g. secologanin) biosynthesis pathway. Catalyzes the conversion of loganin into secologanin. Catalyzes the conversion of secologanin into secoxyloganin. This chain is Secologanin synthase 2, found in Catharanthus roseus (Madagascar periwinkle).